Here is a 376-residue protein sequence, read N- to C-terminus: Formate dehydrogenase 2 (376 aa).

Residues V97 and N121 each contribute to the substrate site. Residues 176 to 177 (RI), D197, 244 to 248 (PLHKD), T270, D296, and 325 to 328 (HISG) contribute to the NAD(+) site.

The protein belongs to the D-isomer specific 2-hydroxyacid dehydrogenase family. FDH subfamily. Homodimer.

It is found in the cytoplasm. The catalysed reaction is formate + NAD(+) = CO2 + NADH. Functionally, catalyzes the NAD(+)-dependent oxidation of formate to carbon dioxide. Formate oxidation is the final step in the methanol oxidation pathway in methylotrophic microorganisms. Has a role in the detoxification of exogenous formate in non-methylotrophic organisms. This chain is Formate dehydrogenase 2 (FDH2), found in Saccharomyces cerevisiae (strain CEN.PK113-7D) (Baker's yeast).